The primary structure comprises 342 residues: Cytosolic Fe-S cluster assembly factor NBP35 (342 aa).

Positions 16 to 42 (SKAAPKLVAPEPEHCPGPESEQAGKGD) are disordered. [4Fe-4S] cluster contacts are provided by Cys-30, Cys-44, Cys-47, and Cys-53. Residue 83–90 (GKGGVGKS) coordinates ATP. [4Fe-4S] cluster-binding residues include Cys-256 and Cys-259.

Belongs to the Mrp/NBP35 ATP-binding proteins family. NUBP1/NBP35 subfamily. Heterotetramer of 2 NBP35 and 2 CFD1 chains. The cofactor is [4Fe-4S] cluster.

Its subcellular location is the cytoplasm. Component of the cytosolic iron-sulfur (Fe/S) protein assembly (CIA) machinery. Required for maturation of extramitochondrial Fe-S proteins. The NBP35-CFD1 heterotetramer forms a Fe-S scaffold complex, mediating the de novo assembly of an Fe-S cluster and its transfer to target apoproteins. The protein is Cytosolic Fe-S cluster assembly factor NBP35 of Coccidioides immitis (strain RS) (Valley fever fungus).